The following is a 347-amino-acid chain: Dihydroorotase (347 aa).

Residues His17 and His19 each contribute to the Zn(2+) site. Residues His19–Arg21 and Asn45 each bind substrate. Residues Lys103, His140, and His178 each contribute to the Zn(2+) site. Lys103 bears the N6-carboxylysine mark. Substrate is bound at residue His140. Leu223 provides a ligand contact to substrate. Asp251 provides a ligand contact to Zn(2+). The active site involves Asp251. Substrate contacts are provided by His255 and Ala267.

This sequence belongs to the metallo-dependent hydrolases superfamily. DHOase family. Class II DHOase subfamily. As to quaternary structure, homodimer. Zn(2+) is required as a cofactor.

The catalysed reaction is (S)-dihydroorotate + H2O = N-carbamoyl-L-aspartate + H(+). Its pathway is pyrimidine metabolism; UMP biosynthesis via de novo pathway; (S)-dihydroorotate from bicarbonate: step 3/3. Its function is as follows. Catalyzes the reversible cyclization of carbamoyl aspartate to dihydroorotate. The sequence is that of Dihydroorotase from Citrobacter koseri (strain ATCC BAA-895 / CDC 4225-83 / SGSC4696).